We begin with the raw amino-acid sequence, 80 residues long: Large ribosomal subunit protein bL28 (80 aa).

A disordered region spans residues 1-23; that stretch reads MARVCQITGKKTRTGNNVSHANN.

Belongs to the bacterial ribosomal protein bL28 family.

The protein is Large ribosomal subunit protein bL28 of Cytophaga hutchinsonii (strain ATCC 33406 / DSM 1761 / CIP 103989 / NBRC 15051 / NCIMB 9469 / D465).